A 320-amino-acid chain; its full sequence is Malate dehydrogenase (320 aa).

Residues 10–15 and aspartate 34 each bind NAD(+); that span reads GAGNIG. Residues arginine 83 and arginine 89 each contribute to the substrate site. NAD(+) contacts are provided by residues asparagine 96 and 119–121; that span reads ITN. Substrate-binding residues include asparagine 121 and arginine 152. Histidine 176 functions as the Proton acceptor in the catalytic mechanism.

This sequence belongs to the LDH/MDH superfamily. MDH type 3 family.

It carries out the reaction (S)-malate + NAD(+) = oxaloacetate + NADH + H(+). Catalyzes the reversible oxidation of malate to oxaloacetate. In Sphingopyxis alaskensis (strain DSM 13593 / LMG 18877 / RB2256) (Sphingomonas alaskensis), this protein is Malate dehydrogenase.